The following is a 221-amino-acid chain: Endo-1,4-beta-xylanase 1 (221 aa).

A signal peptide spans 1–22 (MKFFATIAALVVAAVAAPVAEA). Residues 29-221 (PMLIERAGPG…GTGSASVTVS (193 aa)) enclose the GH11 domain. E114 functions as the Nucleophile in the catalytic mechanism. E208 acts as the Proton donor in catalysis.

Belongs to the glycosyl hydrolase 11 (cellulase G) family.

The protein resides in the secreted. The enzyme catalyses Endohydrolysis of (1-&gt;4)-beta-D-xylosidic linkages in xylans.. It functions in the pathway glycan degradation; xylan degradation. Functionally, endo-1,4-beta-xylanase involved in the hydrolysis of xylan, a major structural heterogeneous polysaccharide found in plant biomass representing the second most abundant polysaccharide in the biosphere, after cellulose. Hydrolyzes xylans from oat spelt and birchwood at similar rates, but it has no detectable activity toward Avicel or carboxymethyl cellulose. The polypeptide is Endo-1,4-beta-xylanase 1 (xynI) (Aureobasidium pullulans (Black yeast)).